The sequence spans 448 residues: Beclin-1 (448 aa).

Met-1 bears the N-acetylmethionine mark. Ser-14 and Ser-29 each carry phosphoserine. The tract at residues 47–66 (TTAQAKPGETQEEEANSGEE) is disordered. Ser-88, Ser-91, and Ser-94 each carry phosphoserine; by AMPK. The BH3 motif lies at 106–125 (TMENLSRRLKVTGDLFDIMS). The segment at 110-157 (LSRRLKVTGDLFDIMSGQTDVDHPLCEECTDTLLDQLDTQLNVTENEC) is interaction with BCL2 and BCL2L1 isoform Bcl-X(L). A Phosphothreonine; by DAPK1 modification is found at Thr-117. A coiled-coil region spans residues 140-268 (DTLLDQLDTQ…LDKLKKTNVF (129 aa)). The evolutionary conserved domain (ECD) stretch occupies residues 243 to 448 (DELKSVENQV…AWVSSQFYNK (206 aa)). Glycyl lysine isopeptide (Lys-Gly) (interchain with G-Cter in ubiquitin) cross-links involve residues Lys-400 and Lys-435. The segment at 423–448 (WTKALKFMLTNLKWGLAWVSSQFYNK) is required for membrane-association.

The protein belongs to the beclin family. A homodimeric form is proposed to exist; this metastable form readily transits to ATG14- or UVRAG-containing complexes with BECN1:UVRAG being more stable than BECN1:ATG14. Component of the PI3K (PI3KC3/PI3K-III/class III phosphatidylinositol 3-kinase) complex whose core is composed of the catalytic subunit PIK3C3, the regulatory subunit PIK3R4 and BECN1, and associates with additional regulatory/auxiliary subunits to form alternative complex forms. Accepted alternative complex forms containing a fourth regulatory subunit in a mutually exclusive manner are PI3K complex I (PI3KC3-C1) containing ATG14, and PI3K complex II (PI3KC3-C2) containing UVRAG. PI3KC3-C1 displays a V-shaped architecture with PIK3R4 serving as a bridge between PIK3C3 and the ATG14:BECN1 subcomplex. Both, PI3KC3-C1 and PI3KC3-C2, can associate with further regulatory subunits, such as RUBCN, SH3GLB1/Bif-1 and AMBRA1. PI3KC3-C1 probably associates with PIK3CB. Forms a complex with PPP2CA and AMBRA1; AMBRA1 and BECN1 components of the complex regulate MYC stability via different pathways. Component of the complex, at least composed of LRPPRC, BECN1 and BCL2; the interactions prevent BECN1 from forming an autophagy-inducing complex with PIK3C3. Interacts with AMBRA1, GOPC, GRID2 and PIK3CB. Interacts with BCL2 and BCL2L1 isoform Bcl-X(L); the interaction inhibits BECN1 function in promoting autophagy by interfering with the formation of the PI3K complex. Interacts with cytosolic HMGB1; inhibits the interaction of BECN1 and BCL2 leading to promotion of autophagy. Interacts with USP10, USP13, VMP1, DAPK1. Interacts with the poly-Gln domain of ATXN3; the interaction causes deubiquitination at Lys-400 and stabilizes BECN1. Interacts with SLAMF1. Interacts with TRIM5; the interaction causes activation of BECN1 by causing its dissociation from its inhibitors BCL2 and TAB2. Interacts with active ULK1 (phosphorylated on 'Ser-317') and MEFV simultaneously. Interacts with TRIM50. Interacts with TRIM16. Interacts with WDR81 and WDR91; negatively regulates the PI3 kinase/PI3K activity associated with endosomal membranes. Interacts with LAPTM4B; competes with EGFR for LAPTM4B binding; regulates EGFR activity. Interacts with ATG14; this interaction is increased in the absence of TMEM39A. Interacts with WASHC1; preventing interaction with AMBRA1 and the DCX(AMBRA1) complex and subsequent ubiquitination. Interacts with TRIM17. Interacts with BCL2L10/BCL-B (via BH1 domain). Interacts with SH3BGRL. Interacts with Irgm1; enhancing BECN1-interacting partners and influencing the composition of the BECN1 complex. Interacts with ARMC3. Interacts with LRPPRC. As to quaternary structure, (Microbial infection) Interacts with murine gammaherpesvirus 68 M11; the viral protein binds BECN1 with higher affinity than cellular BCL2. In terms of processing, phosphorylation at Thr-117 by DAPK1 reduces its interaction with BCL2 and BCL2L1 and promotes induction of autophagy. In response to autophagic stimuli, phosphorylated at serine residues by AMPK in an ATG14-dependent manner, and this phosphorylation is critical for maximally efficient autophagy. Polyubiquitinated by NEDD4, both with 'Lys-11'- and 'Lys-63'-linkages. 'Lys-11'-linked polyubiquitination leads to degradation and is enhanced when the stabilizing interaction partner VPS34 is depleted. Deubiquitinated by USP10 and USP13, leading to stabilize the PIK3C3/VPS34-containing complexes. Polyubiquitinated at Lys-400 with 'Lys-48'-linkages. 'Lys-48'-linked poyubiquitination of Lys-400 leads to degradation. Deubiquitinated by ATXN3, leading to stabilization. Ubiquitinated at Lys-435 via 'Lys-63'-linkage by the DCX(AMBRA1) complex, thereby increasing the association between BECN1 and PIK3C3 to promote PIK3C3 activity. 'Lys-48'-linked ubiquitination by RNF216 leads to proteasomal degradation and autophagy inhibition. Post-translationally, proteolytically processed by caspases including CASP8 and CASP3; the C-terminal fragments lack autophagy-inducing capacity and are proposed to induce apoptosis. Thus the cleavage is proposed to be an determinant to switch from autophagy to apoptosis pathways affecting cellular homeostasis including viral infections and survival of tumor cells.

It is found in the cytoplasm. The protein localises to the golgi apparatus. It localises to the trans-Golgi network membrane. The protein resides in the endosome membrane. Its subcellular location is the endoplasmic reticulum membrane. It is found in the mitochondrion membrane. The protein localises to the endosome. It localises to the cytoplasmic vesicle. The protein resides in the autophagosome. Its subcellular location is the mitochondrion. It is found in the nucleus. Functionally, plays a central role in autophagy. Acts as a core subunit of different PI3K complex forms that mediate formation of phosphatidylinositol 3-phosphate and are believed to play a role in multiple membrane trafficking pathways: PI3KC3-C1 is involved in initiation of autophagosomes and PI3KC3-C2 in maturation of autophagosomes and endocytosis. Involved in regulation of degradative endocytic trafficking and required for the abscission step in cytokinesis, probably in the context of PI3KC3-C2. Essential for the formation of PI3KC3-C2 but not PI3KC3-C1 PI3K complex forms. Involved in endocytosis including endosome formation in neuronal cells. May play a role in antiviral host defense. In terms of biological role, beclin-1-C 35 kDa localized to mitochondria can promote apoptosis; it induces the mitochondrial translocation of BAX and the release of proapoptotic factors. This chain is Beclin-1 (Becn1), found in Mus musculus (Mouse).